The chain runs to 41 residues: Large ribosomal subunit protein bL36B (41 aa).

This sequence belongs to the bacterial ribosomal protein bL36 family.

In Neisseria meningitidis serogroup B (strain ATCC BAA-335 / MC58), this protein is Large ribosomal subunit protein bL36B.